An 84-amino-acid polypeptide reads, in one-letter code: UPF0291 protein EUBELI_00985 (84 aa).

The protein belongs to the UPF0291 family.

It is found in the cytoplasm. The sequence is that of UPF0291 protein EUBELI_00985 from Lachnospira eligens (strain ATCC 27750 / DSM 3376 / VPI C15-48 / C15-B4) (Eubacterium eligens).